The chain runs to 405 residues: Nuclear hormone receptor family member nhr-199 (405 aa).

Positions 20-111 form a DNA-binding region, nuclear receptor; that stretch reads IPYCLICSEV…MGMQRSSVQQ (92 aa). 2 consecutive NR C4-type zinc fingers follow at residues 23–44 and 60–94; these read CLIC…CRAC and CGRN…CKAC. An NR LBD domain is found at 126–376; sequence RGKPVLNKLR…PFSRIHGNQK (251 aa).

Belongs to the nuclear hormone receptor family.

Its subcellular location is the nucleus. In terms of biological role, orphan nuclear receptor. This Caenorhabditis elegans protein is Nuclear hormone receptor family member nhr-199 (nhr-199).